A 182-amino-acid polypeptide reads, in one-letter code: MQNLLPSKVFFTRGIGRGRTELQSFENALRSAGIAQFNIVSVSSILPPRAEIISKDDGLKLLNPGQILFTVLARNSSNELNRMISSAIGYAVPSDRDHWGYLSEHHAYGETENEAGYFAEELAARMLASTMGLEEELKWDDTRKEYVLENKILTTRNIASTTVVLKKDEWTTVVAAAVLIIM.

Ser-44 is modified (pyruvic acid (Ser)).

It belongs to the PdaD family. It depends on pyruvate as a cofactor.

The catalysed reaction is L-arginine + H(+) = agmatine + CO2. This chain is Pyruvoyl-dependent arginine decarboxylase, found in Picrophilus torridus (strain ATCC 700027 / DSM 9790 / JCM 10055 / NBRC 100828 / KAW 2/3).